The sequence spans 513 residues: Cytochrome P450 4p1 (513 aa).

Positions 320 and 459 each coordinate heme.

Belongs to the cytochrome P450 family. Heme serves as cofactor.

It is found in the endoplasmic reticulum membrane. The protein localises to the microsome membrane. Its function is as follows. May be involved in the metabolism of insect hormones and in the breakdown of synthetic insecticides. The protein is Cytochrome P450 4p1 (Cyp4p1) of Drosophila melanogaster (Fruit fly).